Here is a 319-residue protein sequence, read N- to C-terminus: N-acetyl-D-glucosamine kinase (319 aa).

Threonine 14 serves as a coordination point for ATP. Positions 37 and 113 each coordinate substrate. Threonine 135 provides a ligand contact to ATP. Residues 153–155 and aspartate 160 contribute to the substrate site; that span reads GWG. Alanine 220 contributes to the ATP binding site.

It belongs to the eukaryotic-type N-acetylglucosamine kinase family. In terms of assembly, homodimer.

It carries out the reaction N-acetyl-D-glucosamine + ATP = N-acetyl-D-glucosamine 6-phosphate + ADP + H(+). Its function is as follows. Converts N-acetylglucosamine (GlcNAc), a major component of complex carbohydrates, into GlcNAc 6-phosphate. Also has ManNAc kinase activity. The polypeptide is N-acetyl-D-glucosamine kinase (nagk) (Dictyostelium discoideum (Social amoeba)).